Reading from the N-terminus, the 376-residue chain is Alcohol dehydrogenase class-3 (376 aa).

Positions 40, 62, 92, 95, 98, 106, and 170 each coordinate Zn(2+).

It belongs to the zinc-containing alcohol dehydrogenase family. Class-III subfamily. Homodimer. Requires Zn(2+) as cofactor.

The protein resides in the cytoplasm. It carries out the reaction a primary alcohol + NAD(+) = an aldehyde + NADH + H(+). The catalysed reaction is a secondary alcohol + NAD(+) = a ketone + NADH + H(+). The enzyme catalyses S-(hydroxymethyl)glutathione + NADP(+) = S-formylglutathione + NADPH + H(+). It catalyses the reaction S-(hydroxymethyl)glutathione + NAD(+) = S-formylglutathione + NADH + H(+). Its function is as follows. Oxidizes long-chain aliphatic alcohols, long-chain hydroxylated fatty acids and S-hydroxymethylglutathione (hmGSH) in increasing order of preference. Shows little or no activity with short-chain aliphatic alcohols. The polypeptide is Alcohol dehydrogenase class-3 (adhI) (Cereibacter sphaeroides (strain ATCC 17023 / DSM 158 / JCM 6121 / CCUG 31486 / LMG 2827 / NBRC 12203 / NCIMB 8253 / ATH 2.4.1.) (Rhodobacter sphaeroides)).